We begin with the raw amino-acid sequence, 73 residues long: Translation initiation factor IF-1 (73 aa).

Residues 1–72 (MSKKDVIELE…SRGRIVYRKK (72 aa)) enclose the S1-like domain.

This sequence belongs to the IF-1 family. Component of the 30S ribosomal translation pre-initiation complex which assembles on the 30S ribosome in the order IF-2 and IF-3, IF-1 and N-formylmethionyl-tRNA(fMet); mRNA recruitment can occur at any time during PIC assembly.

The protein resides in the cytoplasm. One of the essential components for the initiation of protein synthesis. Stabilizes the binding of IF-2 and IF-3 on the 30S subunit to which N-formylmethionyl-tRNA(fMet) subsequently binds. Helps modulate mRNA selection, yielding the 30S pre-initiation complex (PIC). Upon addition of the 50S ribosomal subunit IF-1, IF-2 and IF-3 are released leaving the mature 70S translation initiation complex. The polypeptide is Translation initiation factor IF-1 (Fusobacterium nucleatum subsp. nucleatum (strain ATCC 25586 / DSM 15643 / BCRC 10681 / CIP 101130 / JCM 8532 / KCTC 2640 / LMG 13131 / VPI 4355)).